Here is a 605-residue protein sequence, read N- to C-terminus: MRIKKKNTRGNARNFITRSQAVRKLQVSLADFRRLCIFKGIYPREPRNKKKANKGSTAPTTFYYAKDIQYLMHEPVLAKFREHKTFARKLTRALGRGEVSSAKRLEENRDSYTLDHIIKERYPSFPDAIRDIDDALNMLFLFSNLPSTNQVSSKIINDAQKICNQWLAYVAKERLVRKVFVSIKGVYYQANIKGEEVRWLVPFKFPENIPSDVDFRIMLTFLEFYSTLLHFVLYKLYTDSGLIYPPKLDLKKDKIISGLSSYILESRQEDSLLKLDPTEIEEDVKVESLDASTLKSALNADEANTDETEKEEEQEKKQEKEQEKEQNEETELDTFEDNNKNKGDILIQPSKYDSPVASLFSAFVFYVSREVPIDILEFLILSCGGNVISEAAMDQIENKKDIDMSKVTHQIVDRPVLKNKVAGRTYIQPQWIFDCINKGELVPANKYLPGEALPPHLSPWGDAIGYDPTAPVEEGEEEESESESESEDQVEEEDQEVVAGEEDDDDDEELQAQKELELEAQGIKYSETSEADKDVNKSKNKKRKVDEEEEEKKLKMIMMSNKQKKLYKKMKYSNAKKEEQAENLKKKKKQIAKQKAKLNKLDSKK.

The sufficient for interaction with ERB1 stretch occupies residues 51–484; that stretch reads KANKGSTAPT…GEEEESESES (434 aa). S288 carries the post-translational modification Phosphoserine. Residues 294–342 are a coiled coil; that stretch reads LKSALNADEANTDETEKEEEQEKKQEKEQEKEQNEETELDTFEDNNKNK. Residues 297–342 form a disordered region; it reads ALNADEANTDETEKEEEQEKKQEKEQEKEQNEETELDTFEDNNKNK. Acidic residues predominate over residues 303–312; the sequence is ANTDETEKEE. T308 is subject to Phosphothreonine. Residues 313–327 show a composition bias toward basic and acidic residues; the sequence is EQEKKQEKEQEKEQN. A BRCT domain is found at 355–449; it reads PVASLFSAFV…ELVPANKYLP (95 aa). The tract at residues 459-605 is disordered; sequence PWGDAIGYDP…AKLNKLDSKK (147 aa). The span at 473 to 510 shows a compositional bias: acidic residues; that stretch reads EEGEEEESESESESEDQVEEEDQEVVAGEEDDDDDEEL. Residues 530-605 adopt a coiled-coil conformation; that stretch reads EADKDVNKSK…AKLNKLDSKK (76 aa). Over residues 562 to 571 the composition is skewed to basic residues; that stretch reads KQKKLYKKMK. Over residues 575 to 584 the composition is skewed to basic and acidic residues; that stretch reads AKKEEQAENL. The span at 585 to 598 shows a compositional bias: basic residues; that stretch reads KKKKKQIAKQKAKL.

The protein belongs to the pescadillo family. As to quaternary structure, component of the NOP7 complex, composed of ERB1, NOP7 and YTM1. The complex is held together by ERB1, which interacts with NOP7 via its N-terminal domain and with YTM1 via a high-affinity interaction between the seven-bladed beta-propeller domains of the 2 proteins. The NOP7 complex associates with the 66S pre-ribosome.

The protein resides in the nucleus. It localises to the nucleolus. It is found in the nucleoplasm. Its function is as follows. Component of the NOP7 complex, which is required for maturation of the 25S and 5.8S ribosomal RNAs and formation of the 60S ribosome. This Saccharomyces cerevisiae (strain YJM789) (Baker's yeast) protein is Pescadillo homolog.